The sequence spans 444 residues: Probable glycine dehydrogenase (decarboxylating) subunit 1 (444 aa).

This sequence belongs to the GcvP family. N-terminal subunit subfamily. In terms of assembly, the glycine cleavage system is composed of four proteins: P, T, L and H. In this organism, the P 'protein' is a heterodimer of two subunits.

The catalysed reaction is N(6)-[(R)-lipoyl]-L-lysyl-[glycine-cleavage complex H protein] + glycine + H(+) = N(6)-[(R)-S(8)-aminomethyldihydrolipoyl]-L-lysyl-[glycine-cleavage complex H protein] + CO2. The glycine cleavage system catalyzes the degradation of glycine. The P protein binds the alpha-amino group of glycine through its pyridoxal phosphate cofactor; CO(2) is released and the remaining methylamine moiety is then transferred to the lipoamide cofactor of the H protein. This is Probable glycine dehydrogenase (decarboxylating) subunit 1 from Chlorobaculum tepidum (strain ATCC 49652 / DSM 12025 / NBRC 103806 / TLS) (Chlorobium tepidum).